Reading from the N-terminus, the 227-residue chain is Urease accessory protein UreF (227 aa).

Belongs to the UreF family. As to quaternary structure, ureD, UreF and UreG form a complex that acts as a GTP-hydrolysis-dependent molecular chaperone, activating the urease apoprotein by helping to assemble the nickel containing metallocenter of UreC. The UreE protein probably delivers the nickel.

The protein localises to the cytoplasm. In terms of biological role, required for maturation of urease via the functional incorporation of the urease nickel metallocenter. This is Urease accessory protein UreF from Actinobacillus pleuropneumoniae serotype 5b (strain L20).